The primary structure comprises 116 residues: Methionine-R-sulfoxide reductase B1 (116 aa).

The region spanning Met-1–Lys-106 is the MsrB domain. Zn(2+) contacts are provided by Cys-23, Cys-26, Cys-71, and Cys-74. The active-site Nucleophile is Sec-95. Position 95 (Sec-95) is a non-standard amino acid, selenocysteine.

The protein belongs to the MsrB Met sulfoxide reductase family. Requires Zn(2+) as cofactor. In terms of processing, truncated MSRB1/SEPX1 proteins produced by failed UGA/Sec decoding are ubiquitinated by the CRL2(FEM1C) E3 ubiquitin-protein ligase complex.

Its subcellular location is the cytoplasm. The protein localises to the nucleus. It is found in the cytoskeleton. The catalysed reaction is L-methionyl-[protein] + [thioredoxin]-disulfide + H2O = L-methionyl-(R)-S-oxide-[protein] + [thioredoxin]-dithiol. It carries out the reaction [thioredoxin]-disulfide + L-methionine + H2O = L-methionine (R)-S-oxide + [thioredoxin]-dithiol. Functionally, methionine-sulfoxide reductase that specifically reduces methionine (R)-sulfoxide back to methionine. While in many cases, methionine oxidation is the result of random oxidation following oxidative stress, methionine oxidation is also a post-translational modification that takes place on specific residue. Acts as a regulator of actin assembly by reducing methionine (R)-sulfoxide mediated by MICALs (MICAL1, MICAL2 or MICAL3) on actin, thereby promoting filament repolymerization. Plays a role in innate immunity by reducing oxidized actin, leading to actin repolymerization in macrophages. This is Methionine-R-sulfoxide reductase B1 (MSRB1) from Pongo abelii (Sumatran orangutan).